Here is a 144-residue protein sequence, read N- to C-terminus: Putative pre-16S rRNA nuclease (144 aa).

The protein belongs to the YqgF nuclease family.

It localises to the cytoplasm. Its function is as follows. Could be a nuclease involved in processing of the 5'-end of pre-16S rRNA. The protein is Putative pre-16S rRNA nuclease of Lacticaseibacillus casei (strain BL23) (Lactobacillus casei).